The primary structure comprises 306 residues: 33 kDa chaperonin (306 aa).

Disulfide bonds link Cys-242/Cys-244 and Cys-275/Cys-278.

This sequence belongs to the HSP33 family. In terms of processing, under oxidizing conditions two disulfide bonds are formed involving the reactive cysteines. Under reducing conditions zinc is bound to the reactive cysteines and the protein is inactive.

The protein localises to the cytoplasm. In terms of biological role, redox regulated molecular chaperone. Protects both thermally unfolding and oxidatively damaged proteins from irreversible aggregation. Plays an important role in the bacterial defense system toward oxidative stress. The chain is 33 kDa chaperonin from Gloeobacter violaceus (strain ATCC 29082 / PCC 7421).